Here is a 205-residue protein sequence, read N- to C-terminus: Urease accessory protein UreG (205 aa).

11 to 18 (GPVGSGKT) is a GTP binding site.

Belongs to the SIMIBI class G3E GTPase family. UreG subfamily. As to quaternary structure, homodimer. UreD, UreF and UreG form a complex that acts as a GTP-hydrolysis-dependent molecular chaperone, activating the urease apoprotein by helping to assemble the nickel containing metallocenter of UreC. The UreE protein probably delivers the nickel.

Its subcellular location is the cytoplasm. In terms of biological role, facilitates the functional incorporation of the urease nickel metallocenter. This process requires GTP hydrolysis, probably effectuated by UreG. The polypeptide is Urease accessory protein UreG (Prochlorococcus marinus (strain NATL2A)).